A 426-amino-acid chain; its full sequence is Enolase (426 aa).

Q165 is a binding site for (2R)-2-phosphoglycerate. E207 functions as the Proton donor in the catalytic mechanism. Mg(2+)-binding residues include D244, E285, and D312. K337, R366, S367, and K388 together coordinate (2R)-2-phosphoglycerate. K337 (proton acceptor) is an active-site residue.

Belongs to the enolase family. It depends on Mg(2+) as a cofactor.

The protein localises to the cytoplasm. It is found in the secreted. The protein resides in the cell surface. It carries out the reaction (2R)-2-phosphoglycerate = phosphoenolpyruvate + H2O. It participates in carbohydrate degradation; glycolysis; pyruvate from D-glyceraldehyde 3-phosphate: step 4/5. Catalyzes the reversible conversion of 2-phosphoglycerate (2-PG) into phosphoenolpyruvate (PEP). It is essential for the degradation of carbohydrates via glycolysis. The sequence is that of Enolase from Thermosynechococcus vestitus (strain NIES-2133 / IAM M-273 / BP-1).